Consider the following 289-residue polypeptide: tRNA dimethylallyltransferase (289 aa).

9-16 (GTTASGKT) contacts ATP. 11–16 (TASGKT) contributes to the substrate binding site. The tract at residues 34–37 (DSLC) is interaction with substrate tRNA.

This sequence belongs to the IPP transferase family. As to quaternary structure, monomer. Mg(2+) is required as a cofactor.

It carries out the reaction adenosine(37) in tRNA + dimethylallyl diphosphate = N(6)-dimethylallyladenosine(37) in tRNA + diphosphate. Functionally, catalyzes the transfer of a dimethylallyl group onto the adenine at position 37 in tRNAs that read codons beginning with uridine, leading to the formation of N6-(dimethylallyl)adenosine (i(6)A). The chain is tRNA dimethylallyltransferase from Campylobacter jejuni (strain RM1221).